A 783-amino-acid polypeptide reads, in one-letter code: LPS-assembly protein LptD (783 aa).

Residues 1–24 (MSCFSRTFLAASISAALFAPQIQA) form the signal peptide.

This sequence belongs to the LptD family. As to quaternary structure, component of the lipopolysaccharide transport and assembly complex. Interacts with LptE and LptA.

The protein resides in the cell outer membrane. In terms of biological role, together with LptE, is involved in the assembly of lipopolysaccharide (LPS) at the surface of the outer membrane. The sequence is that of LPS-assembly protein LptD from Vibrio cholerae serotype O1 (strain ATCC 39315 / El Tor Inaba N16961).